The sequence spans 477 residues: Glutamate--tRNA ligase (477 aa).

A 'HIGH' region motif is present at residues 18–28 (PSPTGFIHLGN). Basic and acidic residues predominate over residues 128–138 (PRYDGSWRPEP). Residues 128 to 151 (PRYDGSWRPEPGKTLPPVPAGMSP) form a disordered region. Residues 250–254 (KLSKR) carry the 'KMSKS' region motif. Lys-253 contributes to the ATP binding site.

The protein belongs to the class-I aminoacyl-tRNA synthetase family. Glutamate--tRNA ligase type 1 subfamily. In terms of assembly, monomer.

It localises to the cytoplasm. It catalyses the reaction tRNA(Glu) + L-glutamate + ATP = L-glutamyl-tRNA(Glu) + AMP + diphosphate. Catalyzes the attachment of glutamate to tRNA(Glu) in a two-step reaction: glutamate is first activated by ATP to form Glu-AMP and then transferred to the acceptor end of tRNA(Glu). In Verminephrobacter eiseniae (strain EF01-2), this protein is Glutamate--tRNA ligase.